We begin with the raw amino-acid sequence, 504 residues long: Maturase K (504 aa).

Belongs to the intron maturase 2 family. MatK subfamily.

It is found in the plastid. It localises to the chloroplast. Usually encoded in the trnK tRNA gene intron. Probably assists in splicing its own and other chloroplast group II introns. In Wollastonia biflora (Beach sunflower), this protein is Maturase K.